The chain runs to 303 residues: NAD kinase (303 aa).

Asp-85 serves as the catalytic Proton acceptor. NAD(+)-binding positions include 85–86 (DG), 159–160 (ND), Arg-187, Asp-189, 200–205 (TAYALS), Ala-224, and Gln-258.

Belongs to the NAD kinase family. A divalent metal cation serves as cofactor.

Its subcellular location is the cytoplasm. The enzyme catalyses NAD(+) + ATP = ADP + NADP(+) + H(+). In terms of biological role, involved in the regulation of the intracellular balance of NAD and NADP, and is a key enzyme in the biosynthesis of NADP. Catalyzes specifically the phosphorylation on 2'-hydroxyl of the adenosine moiety of NAD to yield NADP. This Variovorax paradoxus (strain S110) protein is NAD kinase.